Here is a 169-residue protein sequence, read N- to C-terminus: S-ribosylhomocysteine lyase (169 aa).

Residues histidine 54, histidine 58, and cysteine 128 each coordinate Fe cation.

The protein belongs to the LuxS family. Homodimer. Fe cation is required as a cofactor.

The enzyme catalyses S-(5-deoxy-D-ribos-5-yl)-L-homocysteine = (S)-4,5-dihydroxypentane-2,3-dione + L-homocysteine. In terms of biological role, involved in the synthesis of autoinducer 2 (AI-2) which is secreted by bacteria and is used to communicate both the cell density and the metabolic potential of the environment. The regulation of gene expression in response to changes in cell density is called quorum sensing. Catalyzes the transformation of S-ribosylhomocysteine (RHC) to homocysteine (HC) and 4,5-dihydroxy-2,3-pentadione (DPD). The protein is S-ribosylhomocysteine lyase of Sulfurovum sp. (strain NBC37-1).